Consider the following 428-residue polypeptide: D-amino acid dehydrogenase (428 aa).

3-17 (VVILGSGVVGVASAY) provides a ligand contact to FAD.

It belongs to the DadA oxidoreductase family. FAD is required as a cofactor.

The enzyme catalyses a D-alpha-amino acid + A + H2O = a 2-oxocarboxylate + AH2 + NH4(+). It functions in the pathway amino-acid degradation; D-alanine degradation; NH(3) and pyruvate from D-alanine: step 1/1. Functionally, oxidative deamination of D-amino acids. In Burkholderia pseudomallei (strain K96243), this protein is D-amino acid dehydrogenase.